Reading from the N-terminus, the 734-residue chain is Photosystem I P700 chlorophyll a apoprotein A2 (734 aa).

A run of 8 helical transmembrane segments spans residues 46 to 69 (IFAS…FHVA), 135 to 158 (LYSG…LHLQ), 175 to 199 (LNHH…HVAI), 273 to 291 (MAHH…GHMY), 330 to 353 (LHIQ…QHMY), 369 to 395 (ASLY…IFFV), 417 to 439 (AIIS…LYVH), and 517 to 535 (FLVH…LILV). Residues Cys-559 and Cys-568 each contribute to the [4Fe-4S] cluster site. The next 2 membrane-spanning stretches (helical) occupy residues 575–596 (AFYL…YWHW) and 643–665 (LSVW…MFLI). Chlorophyll a is bound by residues His-654, Met-662, and Tyr-670. Residue Trp-671 participates in phylloquinone binding. Residues 707–727 (LVGLAHFSVGYVLTYAAFVLA) form a helical membrane-spanning segment.

This sequence belongs to the PsaA/PsaB family. The PsaA/B heterodimer binds the P700 chlorophyll special pair and subsequent electron acceptors. PSI consists of a core antenna complex that captures photons, and an electron transfer chain that converts photonic excitation into a charge separation. The eukaryotic PSI reaction center is composed of at least 11 subunits. It depends on P700 is a chlorophyll a/chlorophyll a' dimer, A0 is one or more chlorophyll a, A1 is one or both phylloquinones and FX is a shared 4Fe-4S iron-sulfur center. as a cofactor.

Its subcellular location is the plastid. The protein localises to the chloroplast thylakoid membrane. The catalysed reaction is reduced [plastocyanin] + hnu + oxidized [2Fe-2S]-[ferredoxin] = oxidized [plastocyanin] + reduced [2Fe-2S]-[ferredoxin]. Functionally, psaA and PsaB bind P700, the primary electron donor of photosystem I (PSI), as well as the electron acceptors A0, A1 and FX. PSI is a plastocyanin/cytochrome c6-ferredoxin oxidoreductase, converting photonic excitation into a charge separation, which transfers an electron from the donor P700 chlorophyll pair to the spectroscopically characterized acceptors A0, A1, FX, FA and FB in turn. Oxidized P700 is reduced on the lumenal side of the thylakoid membrane by plastocyanin or cytochrome c6. The chain is Photosystem I P700 chlorophyll a apoprotein A2 from Pyropia yezoensis (Susabi-nori).